Reading from the N-terminus, the 264-residue chain is Major prion protein (264 aa).

An N-terminal signal peptide occupies residues 1–24 (MVKSHIGSWILVLFVAMWSDVGLC). The interval 25–241 (KKRPKPGGGW…ESEAYYQRGA (217 aa)) is interaction with GRB2, ERI3 and SYN1. Residues 28–118 (PKPGGGWNTG…QWNKPSKPKT (91 aa)) form a disordered region. 6 repeat units span residues 54–62 (SQGGGGWGQ), 63–70 (PHGGGWGQ), 71–78 (PHGGGWGQ), 79–86 (PHGGGWGQ), 87–94 (PHGGGWGQ), and 95–103 (PHGGGGWGQ). The interval 54-103 (SQGGGGWGQPHGGGWGQPHGGGWGQPHGGGWGQPHGGGWGQPHGGGGWGQ) is 6 X 8 AA tandem repeats of P-H-G-G-G-W-G-Q. Residues 55 to 107 (QGGGGWGQPHGGGWGQPHGGGWGQPHGGGWGQPHGGGWGQPHGGGGWGQGGTH) are compositionally biased toward gly residues. Residues His-72, Gly-73, Gly-74, His-80, Gly-81, Gly-82, His-88, Gly-89, Gly-90, His-96, Gly-98, and Gly-99 each contribute to the Cu(2+) site. A disulfide bond links Cys-190 and Cys-225. Asn-192 and Asn-208 each carry an N-linked (GlcNAc...) asparagine glycan. A lipid anchor (GPI-anchor amidated alanine) is attached at Ala-241. The propeptide at 242–264 (SVILFSSPPVILLISFLIFLIVG) is removed in mature form.

It belongs to the prion family. In terms of assembly, monomer and homodimer. Has a tendency to aggregate into amyloid fibrils containing a cross-beta spine, formed by a steric zipper of superposed beta-strands. Soluble oligomers may represent an intermediate stage on the path to fibril formation. Copper binding may promote oligomerization. Interacts with GRB2, APP, ERI3/PRNPIP and SYN1. Mislocalized cytosolically exposed PrP interacts with MGRN1; this interaction alters MGRN1 subcellular location and causes lysosomal enlargement. Interacts with KIAA1191.

The protein resides in the cell membrane. It localises to the golgi apparatus. Its function is as follows. Its primary physiological function is unclear. Has cytoprotective activity against internal or environmental stresses. May play a role in neuronal development and synaptic plasticity. May be required for neuronal myelin sheath maintenance. May play a role in iron uptake and iron homeostasis. Soluble oligomers are toxic to cultured neuroblastoma cells and induce apoptosis (in vitro). Association with GPC1 (via its heparan sulfate chains) targets PRNP to lipid rafts. Also provides Cu(2+) or Zn(2+) for the ascorbate-mediated GPC1 deaminase degradation of its heparan sulfate side chains. The polypeptide is Major prion protein (PRNP) (Tragelaphus imberbis (Lesser kudu)).